Consider the following 195-residue polypeptide: 3-isopropylmalate dehydratase small subunit (195 aa).

It belongs to the LeuD family. LeuD type 1 subfamily. As to quaternary structure, heterodimer of LeuC and LeuD.

The catalysed reaction is (2R,3S)-3-isopropylmalate = (2S)-2-isopropylmalate. It participates in amino-acid biosynthesis; L-leucine biosynthesis; L-leucine from 3-methyl-2-oxobutanoate: step 2/4. In terms of biological role, catalyzes the isomerization between 2-isopropylmalate and 3-isopropylmalate, via the formation of 2-isopropylmaleate. This is 3-isopropylmalate dehydratase small subunit from Oenococcus oeni (strain ATCC BAA-331 / PSU-1).